We begin with the raw amino-acid sequence, 86 residues long: MAFSHTKKVGPTGRFGPRYGLGIRKRVLTVEIKQRKKHVCPFCRSKAVIREAYGIYRCKKCGKQFTGLAYYPYEHLHEYYKIRGGQ.

Positions 40, 43, 58, and 61 each coordinate Zn(2+). Residues 40-61 (CPFCRSKAVIREAYGIYRCKKC) form a C4-type zinc finger.

This sequence belongs to the eukaryotic ribosomal protein eL43 family. Putative zinc-binding subfamily. Part of the 50S ribosomal subunit. Zn(2+) is required as a cofactor.

Binds to the 23S rRNA. The protein is Large ribosomal subunit protein eL43 of Nanoarchaeum equitans (strain Kin4-M).